An 887-amino-acid polypeptide reads, in one-letter code: Lateral signaling target protein 2 homolog (887 aa).

Residue Lys-87 forms a Glycyl lysine isopeptide (Lys-Gly) (interchain with G-Cter in ubiquitin) linkage. Residues 308–327 (PALSAPLPPEGPLSAKAKDP) are disordered. Position 334 is a phosphoserine (Ser-334). Disordered regions lie at residues 354–396 (DEMS…GSDE) and 412–474 (ALAR…ASLA). Residue Thr-516 is modified to Phosphothreonine. At Ser-586 the chain carries Phosphoserine; by MAP2K. The tract at residues 599 to 714 (LAKASDRAPE…THAAPQATRE (116 aa)) is disordered. Residues 602-612 (ASDRAPERQEE) show a composition bias toward basic and acidic residues. Residues 638–648 (TSGSQVDTASG) are compositionally biased toward polar residues. Low complexity-rich tracts occupy residues 681 to 693 (SGSSSSTAGSCSS) and 700 to 711 (AAPAATHAAPQA). The FYVE-type zinc-finger motif lies at 817 to 879 (DEACGFCTAC…THCYMFHVTP (63 aa)). Cys-823, Cys-826, Cys-839, Cys-842, Cys-847, Cys-850, and Cys-869 together coordinate Zn(2+). Thr-870 bears the Phosphothreonine; by MAP2K mark. Cys-872 lines the Zn(2+) pocket.

Belongs to the lst-2 family. Interacts with TRIM3. In terms of processing, monoubiquitination at Lys-87 prevents binding to phosphatidylinositol 3-phosphate (PI3P) and localization to early endosome membranes.

Its subcellular location is the cytoplasm. The protein localises to the cytosol. It is found in the early endosome membrane. Its function is as follows. Negative regulator of epidermal growth factor receptor (EGFR) signaling. Acts by promoting EGFR degradation in endosomes when not monoubiquitinated. The polypeptide is Lateral signaling target protein 2 homolog (ZFYVE28) (Homo sapiens (Human)).